The following is a 266-amino-acid chain: Glutamate racemase (266 aa).

Substrate is bound by residues 9-10 (DS) and 41-42 (YG). The active-site Proton donor/acceptor is Cys-72. Substrate is bound at residue 73-74 (NT). Cys-183 (proton donor/acceptor) is an active-site residue. Substrate is bound at residue 184–185 (TH).

This sequence belongs to the aspartate/glutamate racemases family.

It catalyses the reaction L-glutamate = D-glutamate. Its pathway is cell wall biogenesis; peptidoglycan biosynthesis. Provides the (R)-glutamate required for cell wall biosynthesis. In Listeria innocua serovar 6a (strain ATCC BAA-680 / CLIP 11262), this protein is Glutamate racemase.